The following is a 386-amino-acid chain: Pepsin A (386 aa).

The signal sequence occupies residues 1 to 15 (MKWLLLLSLVALSEC). Residues 16-60 (YIYKVPLVKKKSLRKNLMEQGLLQDYLKTHSINPASKYLKEAASM) constitute a propeptide, activation peptide. In terms of domain architecture, Peptidase A1 spans 74 to 383 (YFGTIGIGTP…DRGNNQVGLA (310 aa)). Residue Asp92 is part of the active site. Disulfide bonds link Cys105–Cys110 and Cys266–Cys270. The active site involves Asp275. Cys309 and Cys342 are oxidised to a cystine.

The protein belongs to the peptidase A1 family.

It localises to the secreted. The catalysed reaction is Preferential cleavage: hydrophobic, preferably aromatic, residues in P1 and P1' positions. Cleaves 1-Phe-|-Val-2, 4-Gln-|-His-5, 13-Glu-|-Ala-14, 14-Ala-|-Leu-15, 15-Leu-|-Tyr-16, 16-Tyr-|-Leu-17, 23-Gly-|-Phe-24, 24-Phe-|-Phe-25 and 25-Phe-|-Tyr-26 bonds in the B chain of insulin.. Shows particularly broad specificity; although bonds involving phenylalanine and leucine are preferred, many others are also cleaved to some extent. The protein is Pepsin A (PGA) of Rhinolophus ferrumequinum (Greater horseshoe bat).